Here is a 312-residue protein sequence, read N- to C-terminus: Aspartate carbamoyltransferase catalytic subunit (312 aa).

The carbamoyl phosphate site is built by R55 and T56. L-aspartate is bound at residue K83. R105, H138, and Q141 together coordinate carbamoyl phosphate. Residues R171 and R225 each coordinate L-aspartate. Positions 266 and 267 each coordinate carbamoyl phosphate.

The protein belongs to the aspartate/ornithine carbamoyltransferase superfamily. ATCase family. As to quaternary structure, heterododecamer (2C3:3R2) of six catalytic PyrB chains organized as two trimers (C3), and six regulatory PyrI chains organized as three dimers (R2).

The catalysed reaction is carbamoyl phosphate + L-aspartate = N-carbamoyl-L-aspartate + phosphate + H(+). It participates in pyrimidine metabolism; UMP biosynthesis via de novo pathway; (S)-dihydroorotate from bicarbonate: step 2/3. Functionally, catalyzes the condensation of carbamoyl phosphate and aspartate to form carbamoyl aspartate and inorganic phosphate, the committed step in the de novo pyrimidine nucleotide biosynthesis pathway. This is Aspartate carbamoyltransferase catalytic subunit from Corynebacterium efficiens (strain DSM 44549 / YS-314 / AJ 12310 / JCM 11189 / NBRC 100395).